The chain runs to 156 residues: Lipoprotein signal peptidase (156 aa).

A run of 3 helical transmembrane segments spans residues 37–57, 68–88, and 95–115; these read VIPG…FGFL, FFVV…KSAE, and ILGL…RILY. Residues Asp-120 and Asp-138 contribute to the active site. Residues 133–153 form a helical membrane-spanning segment; that stretch reads AFNVADIAICLGAFAMIVSFY.

This sequence belongs to the peptidase A8 family.

The protein localises to the cell inner membrane. The enzyme catalyses Release of signal peptides from bacterial membrane prolipoproteins. Hydrolyzes -Xaa-Yaa-Zaa-|-(S,diacylglyceryl)Cys-, in which Xaa is hydrophobic (preferably Leu), and Yaa (Ala or Ser) and Zaa (Gly or Ala) have small, neutral side chains.. The protein operates within protein modification; lipoprotein biosynthesis (signal peptide cleavage). This protein specifically catalyzes the removal of signal peptides from prolipoproteins. This is Lipoprotein signal peptidase from Maridesulfovibrio salexigens (strain ATCC 14822 / DSM 2638 / NCIMB 8403 / VKM B-1763) (Desulfovibrio salexigens).